The chain runs to 482 residues: Glutamyl-tRNA(Gln) amidotransferase subunit A (482 aa).

Residues Lys75 and Ser150 each act as charge relay system in the active site. The active-site Acyl-ester intermediate is the Ser174.

The protein belongs to the amidase family. GatA subfamily. As to quaternary structure, heterotrimer of A, B and C subunits.

The enzyme catalyses L-glutamyl-tRNA(Gln) + L-glutamine + ATP + H2O = L-glutaminyl-tRNA(Gln) + L-glutamate + ADP + phosphate + H(+). Functionally, allows the formation of correctly charged Gln-tRNA(Gln) through the transamidation of misacylated Glu-tRNA(Gln) in organisms which lack glutaminyl-tRNA synthetase. The reaction takes place in the presence of glutamine and ATP through an activated gamma-phospho-Glu-tRNA(Gln). This Deinococcus radiodurans (strain ATCC 13939 / DSM 20539 / JCM 16871 / CCUG 27074 / LMG 4051 / NBRC 15346 / NCIMB 9279 / VKM B-1422 / R1) protein is Glutamyl-tRNA(Gln) amidotransferase subunit A.